We begin with the raw amino-acid sequence, 433 residues long: 23S rRNA (uracil(1939)-C(5))-methyltransferase RlmD (433 aa).

Residues 10–68 enclose the TRAM domain; sequence RTTTRQIITVSVNDLDSFGQGVARHNGKTLFIPGLLPQENAEVTVTEDKKQYARAKVVR. Positions 81, 87, 90, and 162 each coordinate [4Fe-4S] cluster. Residues glutamine 265, phenylalanine 294, asparagine 299, glutamate 315, asparagine 342, and aspartate 363 each coordinate S-adenosyl-L-methionine. The active-site Nucleophile is the cysteine 389.

Belongs to the class I-like SAM-binding methyltransferase superfamily. RNA M5U methyltransferase family. RlmD subfamily.

It carries out the reaction uridine(1939) in 23S rRNA + S-adenosyl-L-methionine = 5-methyluridine(1939) in 23S rRNA + S-adenosyl-L-homocysteine + H(+). In terms of biological role, catalyzes the formation of 5-methyl-uridine at position 1939 (m5U1939) in 23S rRNA. The polypeptide is 23S rRNA (uracil(1939)-C(5))-methyltransferase RlmD (Escherichia coli O157:H7).